The sequence spans 486 residues: Cobyric acid synthase (486 aa).

The GATase cobBQ-type domain occupies 248-435 (VLNVVVPVLP…LHGLFESPAA (188 aa)). Cys329 serves as the catalytic Nucleophile. Residue His427 is part of the active site.

Belongs to the CobB/CobQ family. CobQ subfamily.

It participates in cofactor biosynthesis; adenosylcobalamin biosynthesis. In terms of biological role, catalyzes amidations at positions B, D, E, and G on adenosylcobyrinic A,C-diamide. NH(2) groups are provided by glutamine, and one molecule of ATP is hydrogenolyzed for each amidation. This Pseudomonas syringae pv. tomato (strain ATCC BAA-871 / DC3000) protein is Cobyric acid synthase.